We begin with the raw amino-acid sequence, 633 residues long: Early transcription factor 70 kDa subunit (633 aa).

The region spanning arginine 32–glutamate 185 is the Helicase ATP-binding domain. Residue histidine 45–threonine 52 coordinates ATP. The DEXH box motif lies at aspartate 135 to histidine 138. One can recognise a Helicase C-terminal domain in the interval lysine 326–leucine 505.

Belongs to the helicase family. VETF subfamily. Heterodimer of a 70 kDa and a 82 kDa subunit. Part of the early transcription complex composed of ETF, RAP94, and the DNA-directed RNA polymerase.

The protein localises to the virion. Its function is as follows. Acts with RNA polymerase to initiate transcription from early gene promoters. Is recruited by the RPO-associated protein of 94 kDa (RAP94) to form the early transcription complex, which also contains the core RNA polymerase. ETF heterodimer binds to early gene promoters. The chain is Early transcription factor 70 kDa subunit (VETFS) from Vertebrata (FPV).